A 1173-amino-acid chain; its full sequence is MRDLLLGTTIPSYFSWLGLFPRFLVWFGFLKASFFCSSRNQSAGESGRRLKMKRAREDVHTDTQKRKPEVSSRGETNKLPRTIDALTYLKAVKDIFHDNKEKYESFLELMKEFKAQTIDTNGVIERIKVLFKGYRDLLLGFNTFLPKGYKITLLPEEEKPKIRVDFKDAIGFVTKIKTRFGDDEHAYKRFLDILNLYRKEKKSISEVYEEVTMLFKGHEDLLMEFVNFLPNCPESAPSTKNAVPRHKGTATTAMHSDKKRKQRCKLEDYSGHSDQREDGDENLVTCSADSPVGEGQPGYFRDYENREDTETDTADRTEKSAASGSQDIGNHKSTTKYVGTPINELDLSECTQCTPSYRLLPKDYAVEIPSYRNTLGKKTLNDHLVSVTSGSEDYSFSHMRKNQYEESLFRCEDDRYEMDMLLGSVSSAIKQVEILLEKMNNNTISVDSTICIEKHLSAMNLRCIERLYGDNGLDVMDLLKKNMHSALPVILTRLKQKQEEWARCHSDFQKVWAEVYAKNHHKSLDHRSFYFKQQDSKNLSTKCLVAEVKDISEKKHQEDLLQAIAVRVMPLFTPDLEFNYCDTQIHEDLYLLIKYYCEEICATEQSDKVMKLWITFLEPIFGILSRSQDNLALEDVSKLKNNRELQDACLAVKETASGSNRKHPISPKRLSKDNTKMQGSSSREDVSANIKVKTAQPDKLQDDAAMTNEVIQSSKFVSPKNDQIMEDEGNHMVNAASVEKHELEEGELSPTASREQSNFEVNGQNAFKPLQKVTDNVRSNKDKQSCDKKGAKNKTRAEDDKQENCHKLSENNKTASEMLVSGTKVSCHEENNRVMNCNGRGSVAGEMANGNQGEDGSFAFSERFLQTVKPVAKHLSWPLQASETCSQNDSQVFYGNDSYYVLFRLHQMLYERIQTAKKHSEKKWKAADNTTPDSYPRFMDALYNLLDGSIDNTKFEDECRAIFGAQSYVLFTLDKLVQKFVKHLHSVASDETDTKLLQLHAYENYRKPGKFFDLVYHENACALLHEANIYRIRYSSEGTRLSIQLMNSGNNQLEVMGVAMEPAFADYLQNKCLKSVNDEENHGLFLNRNKKKFTSLDESRGMPVAMERLNIINEMECRMACSSSKVKYVANTSDLLYRSKQGKPNSRVSEILKQRRISRFHIMLNCRLCALPL.

Residues 40–75 form a disordered region; the sequence is NQSAGESGRRLKMKRAREDVHTDTQKRKPEVSSRGE. Residues 55–75 show a composition bias toward basic and acidic residues; it reads AREDVHTDTQKRKPEVSSRGE. 2 PAH domains span residues 79–148 and 162–232; these read LPRT…LPKG and IRVD…LPNC. Disordered regions lie at residues 236–337, 655–697, and 740–813; these read APST…TTKY, TASG…TAQP, and KHEL…ENNK. Composition is skewed to basic and acidic residues over residues 264–276 and 301–319; these read CKLE…SDQR and RDYE…RTEK. The span at 320–337 shows a compositional bias: polar residues; the sequence is SAASGSQDIGNHKSTTKY. The segment covering 750–765 has biased composition (polar residues); it reads PTASREQSNFEVNGQN. Positions 778 to 810 are enriched in basic and acidic residues; the sequence is RSNKDKQSCDKKGAKNKTRAEDDKQENCHKLSE.

The protein localises to the nucleus. Acts as a transcriptional repressor. Plays roles in regulating gene expression and genome stability. The sequence is that of Paired amphipathic helix protein Sin3-like 6 (SNL6) from Arabidopsis thaliana (Mouse-ear cress).